Here is a 643-residue protein sequence, read N- to C-terminus: Phosphomethylpyrimidine synthase (643 aa).

Residues Asn-248, Met-277, Tyr-306, His-342, 362–364, 403–406, and Glu-442 contribute to the substrate site; these read SRG and DGLR. A Zn(2+)-binding site is contributed by His-446. Tyr-469 provides a ligand contact to substrate. His-510 contributes to the Zn(2+) binding site. Cys-590, Cys-593, and Cys-598 together coordinate [4Fe-4S] cluster.

It belongs to the ThiC family. As to quaternary structure, homodimer. The cofactor is [4Fe-4S] cluster.

The enzyme catalyses 5-amino-1-(5-phospho-beta-D-ribosyl)imidazole + S-adenosyl-L-methionine = 4-amino-2-methyl-5-(phosphooxymethyl)pyrimidine + CO + 5'-deoxyadenosine + formate + L-methionine + 3 H(+). It participates in cofactor biosynthesis; thiamine diphosphate biosynthesis. In terms of biological role, catalyzes the synthesis of the hydroxymethylpyrimidine phosphate (HMP-P) moiety of thiamine from aminoimidazole ribotide (AIR) in a radical S-adenosyl-L-methionine (SAM)-dependent reaction. The sequence is that of Phosphomethylpyrimidine synthase from Burkholderia multivorans (strain ATCC 17616 / 249).